A 179-amino-acid polypeptide reads, in one-letter code: Deoxyuridine 5'-triphosphate nucleotidohydrolase, mitochondrial (179 aa).

The transit peptide at 1–41 (MPIEQKYFSLFSNLFKRLTTNNNNNNYLKMAPPNFETFKVK) directs the protein to the mitochondrion. DUTP-binding positions include 97–99 (RSG), 111–114 (GVID), glycine 122, arginine 165, and 170–171 (FG).

It belongs to the dUTPase family. Homotrimer. Requires Mg(2+) as cofactor.

The protein localises to the mitochondrion. The catalysed reaction is dUTP + H2O = dUMP + diphosphate + H(+). It participates in pyrimidine metabolism; dUMP biosynthesis; dUMP from dCTP (dUTP route): step 2/2. Its function is as follows. This enzyme is involved in nucleotide metabolism: it produces dUMP, the immediate precursor of thymidine nucleotides and it decreases the intracellular concentration of dUTP so that uracil cannot be incorporated into DNA. This is Deoxyuridine 5'-triphosphate nucleotidohydrolase, mitochondrial (dut) from Dictyostelium discoideum (Social amoeba).